A 126-amino-acid polypeptide reads, in one-letter code: Fluoride-specific ion channel FluC (126 aa).

4 helical membrane-spanning segments follow: residues 4-24 (FMLLGFIAFGGAFGACARYLI), 35-55 (GFPYGTLTVNIVGSLIMGVLM), 71-91 (IIGLGFLGALTTFSTFSMDNV), and 104-124 (LNILLNVTLSITACFIGFQLM). 2 residues coordinate Na(+): Gly-78 and Thr-81.

It belongs to the fluoride channel Fluc/FEX (TC 1.A.43) family.

Its subcellular location is the cell inner membrane. The catalysed reaction is fluoride(in) = fluoride(out). With respect to regulation, na(+) is not transported, but it plays an essential structural role and its presence is essential for fluoride channel function. Fluoride-specific ion channel. Important for reducing fluoride concentration in the cell, thus reducing its toxicity. The polypeptide is Fluoride-specific ion channel FluC (Aliivibrio salmonicida (strain LFI1238) (Vibrio salmonicida (strain LFI1238))).